Consider the following 248-residue polypeptide: Anamorsin homolog (248 aa).

The interval 4–129 (FKGLQKSLYI…ETGSSARLSF (126 aa)) is N-terminal SAM-like domain. Residues 130-161 (AKKNASAVNVWKISGDDEELIDEEELLDEEDK) form a linker region. [2Fe-2S] cluster-binding residues include Cys-172, Cys-181, Cys-184, and Cys-186. Residues 172–186 (CSTTGKRKACKNCSC) are fe-S binding site A. The [4Fe-4S] cluster site is built by Cys-209, Cys-212, Cys-220, and Cys-223. 2 short sequence motifs (cx2C motif) span residues 209 to 212 (CGNC) and 220 to 223 (CSTC). Positions 209 to 223 (CGNCYLGDAFRCSTC) are fe-S binding site B.

This sequence belongs to the anamorsin family. As to quaternary structure, monomer. The cofactor is [2Fe-2S] cluster. [4Fe-4S] cluster is required as a cofactor.

It is found in the cytoplasm. It localises to the mitochondrion intermembrane space. Functionally, component of the cytosolic iron-sulfur (Fe-S) protein assembly (CIA) machinery. Required for the maturation of extramitochondrial Fe-S proteins. Part of an electron transfer chain functioning in an early step of cytosolic Fe-S biogenesis, facilitating the de novo assembly of a [4Fe-4S] cluster on the cytosolic Fe-S scaffold complex. Electrons are transferred from NADPH via a FAD- and FMN-containing diflavin oxidoreductase. Together with the diflavin oxidoreductase, also required for the assembly of the diferric tyrosyl radical cofactor of ribonucleotide reductase (RNR), probably by providing electrons for reduction during radical cofactor maturation in the catalytic small subunit. This chain is Anamorsin homolog, found in Drosophila yakuba (Fruit fly).